Here is an 843-residue protein sequence, read N- to C-terminus: Neuroligin-1 (843 aa).

The signal sequence occupies residues 1–45; that stretch reads MALPRCMWPNYVWRAMMACVVHRGSGAPLTLCLLGCLLQTFHVLS. Topologically, residues 46 to 697 are extracellular; that stretch reads QKLDDVDPLV…DQRDYSTELS (652 aa). Asn109 carries an N-linked (GlcNAc...) (complex) asparagine glycan. 2 disulfide bridges follow: Cys117–Cys153 and Cys172–Cys181. Residues Asn303 and Asn343 are each glycosylated (N-linked (GlcNAc...) (complex) asparagine). Intrachain disulfides connect Cys342–Cys353 and Cys512–Cys546. A glycan (N-linked (GlcNAc...) asparagine) is linked at Asn547. The disordered stretch occupies residues 647–688; the sequence is TKVPSTDITLRPTRKNSTPVTSAFPTAKQDDPKQQPSPFSVD. The span at 661-670 shows a compositional bias: polar residues; that stretch reads KNSTPVTSAF. O-linked (GalNAc...) serine glycans are attached at residues Ser683 and Ser686. The helical transmembrane segment at 698–718 threads the bilayer; sequence VTIAVGASLLFLNILAFAALY. Over 719 to 843 the chain is Cytoplasmic; the sequence is YKKDKRRHDV…HPHSHSTTRV (125 aa). The segment at 822–843 is disordered; that stretch reads GGQNNTLPHPHPHPHSHSTTRV. Basic residues predominate over residues 831 to 843; the sequence is PHPHPHSHSTTRV.

This sequence belongs to the type-B carboxylesterase/lipase family. In terms of assembly, interacts with neurexins NRXN1, NRXN2 and NRXN3. Interaction with neurexins is mediated by heparan sulfate glycan modification on neurexin. Interacts with NLGN3. Interacts (via its C-terminus) with DLG4/PSD-95 (via PDZ domain 3). Interacts with GOPC. Interacts with AIP1 and PDZRN3. The N-terminus is blocked. As to expression, expressed in brain, almost exclusively in neurons, and spinal cord. Detected in pancreas islet beta cells.

Its subcellular location is the cell membrane. The protein localises to the postsynaptic density. The protein resides in the synaptic cleft. It is found in the synaptic cell membrane. Its function is as follows. Cell surface protein involved in cell-cell-interactions via its interactions with neurexin family members. Plays a role in synapse function and synaptic signal transmission, and probably mediates its effects by recruiting and clustering other synaptic proteins. May promote the initial formation of synapses, but is not essential for this. In vitro, triggers the de novo formation of presynaptic structures. May be involved in specification of excitatory synapses. Required to maintain wakefulness quality and normal synchrony of cerebral cortex activity during wakefulness and sleep. The protein is involved in nervous system development. This chain is Neuroligin-1 (Nlgn1), found in Rattus norvegicus (Rat).